A 494-amino-acid chain; its full sequence is Anaerobic nitric oxide reductase flavorubredoxin (494 aa).

The zinc metallo-hydrolase stretch occupies residues 30 to 210 (TKGTSYNSYL…PFSALVTAKI (181 aa)). 6 residues coordinate Fe cation: histidine 79, glutamate 81, aspartate 83, histidine 147, aspartate 166, and histidine 227. Positions 254 to 393 (ITIFYDSMSN…ECREHGQQIA (140 aa)) constitute a Flavodoxin-like domain. Residues 260–264 (SMSNN) and 342–369 (AFGS…ETAI) each bind FMN. One can recognise a Rubredoxin-like domain in the interval 441–492 (CQCMVCTVCNWVYDPAKGEPNQGIEVGTTWADVPDYFLCPECHLGKDVFVEY). Fe cation contacts are provided by cysteine 446, cysteine 449, cysteine 479, and cysteine 482.

The protein in the N-terminal section; belongs to the zinc metallo-hydrolase group 3 family. Homotetramer. Fe cation serves as cofactor. The cofactor is FMN.

It is found in the cytoplasm. It participates in nitrogen metabolism; nitric oxide reduction. Anaerobic nitric oxide reductase; uses NADH to detoxify nitric oxide (NO), protecting several 4Fe-4S NO-sensitive enzymes. Has at least 2 reductase partners, only one of which (NorW, flavorubredoxin reductase) has been identified. NO probably binds to the di-iron center; electrons enter from the NorW at rubredoxin and are transferred sequentially to the FMN center and the di-iron center. Also able to function as an aerobic oxygen reductase. The protein is Anaerobic nitric oxide reductase flavorubredoxin of Vibrio vulnificus (strain YJ016).